The sequence spans 148 residues: Large ribosomal subunit protein uL13 (148 aa).

The protein belongs to the universal ribosomal protein uL13 family. In terms of assembly, part of the 50S ribosomal subunit.

In terms of biological role, this protein is one of the early assembly proteins of the 50S ribosomal subunit, although it is not seen to bind rRNA by itself. It is important during the early stages of 50S assembly. The chain is Large ribosomal subunit protein uL13 from Sulfolobus acidocaldarius (strain ATCC 33909 / DSM 639 / JCM 8929 / NBRC 15157 / NCIMB 11770).